Here is a 156-residue protein sequence, read N- to C-terminus: Ribosomal RNA large subunit methyltransferase H (156 aa).

S-adenosyl-L-methionine-binding positions include L73, G104, and 123-128; that span reads LSSLTL.

The protein belongs to the RNA methyltransferase RlmH family. In terms of assembly, homodimer.

It is found in the cytoplasm. It carries out the reaction pseudouridine(1915) in 23S rRNA + S-adenosyl-L-methionine = N(3)-methylpseudouridine(1915) in 23S rRNA + S-adenosyl-L-homocysteine + H(+). In terms of biological role, specifically methylates the pseudouridine at position 1915 (m3Psi1915) in 23S rRNA. The chain is Ribosomal RNA large subunit methyltransferase H from Neisseria meningitidis serogroup C (strain 053442).